Reading from the N-terminus, the 145-residue chain is 3-hydroxyacyl-[acyl-carrier-protein] dehydratase FabZ (145 aa).

Residue His-49 is part of the active site.

This sequence belongs to the thioester dehydratase family. FabZ subfamily.

The protein resides in the cytoplasm. It catalyses the reaction a (3R)-hydroxyacyl-[ACP] = a (2E)-enoyl-[ACP] + H2O. In terms of biological role, involved in unsaturated fatty acids biosynthesis. Catalyzes the dehydration of short chain beta-hydroxyacyl-ACPs and long chain saturated and unsaturated beta-hydroxyacyl-ACPs. In Rickettsia massiliae (strain Mtu5), this protein is 3-hydroxyacyl-[acyl-carrier-protein] dehydratase FabZ.